Here is a 500-residue protein sequence, read N- to C-terminus: Probable malate:quinone oxidoreductase (500 aa).

It belongs to the MQO family. Requires FAD as cofactor.

It carries out the reaction (S)-malate + a quinone = a quinol + oxaloacetate. The protein operates within carbohydrate metabolism; tricarboxylic acid cycle; oxaloacetate from (S)-malate (quinone route): step 1/1. This is Probable malate:quinone oxidoreductase from Corynebacterium glutamicum (strain R).